The chain runs to 352 residues: UDP-N-acetylglucosamine--N-acetylmuramyl-(pentapeptide) pyrophosphoryl-undecaprenol N-acetylglucosamine transferase (352 aa).

UDP-N-acetyl-alpha-D-glucosamine-binding positions include 11 to 13, Asn-120, Arg-161, Ser-188, and Gln-286; that span reads TGG.

Belongs to the glycosyltransferase 28 family. MurG subfamily.

It is found in the cell inner membrane. The enzyme catalyses di-trans,octa-cis-undecaprenyl diphospho-N-acetyl-alpha-D-muramoyl-L-alanyl-D-glutamyl-meso-2,6-diaminopimeloyl-D-alanyl-D-alanine + UDP-N-acetyl-alpha-D-glucosamine = di-trans,octa-cis-undecaprenyl diphospho-[N-acetyl-alpha-D-glucosaminyl-(1-&gt;4)]-N-acetyl-alpha-D-muramoyl-L-alanyl-D-glutamyl-meso-2,6-diaminopimeloyl-D-alanyl-D-alanine + UDP + H(+). It participates in cell wall biogenesis; peptidoglycan biosynthesis. Its function is as follows. Cell wall formation. Catalyzes the transfer of a GlcNAc subunit on undecaprenyl-pyrophosphoryl-MurNAc-pentapeptide (lipid intermediate I) to form undecaprenyl-pyrophosphoryl-MurNAc-(pentapeptide)GlcNAc (lipid intermediate II). The chain is UDP-N-acetylglucosamine--N-acetylmuramyl-(pentapeptide) pyrophosphoryl-undecaprenol N-acetylglucosamine transferase from Prochlorococcus marinus (strain NATL2A).